The sequence spans 515 residues: 2,3-bisphosphoglycerate-independent phosphoglycerate mutase (515 aa).

Mn(2+) is bound by residues aspartate 14 and serine 64. Catalysis depends on serine 64, which acts as the Phosphoserine intermediate. Substrate contacts are provided by residues histidine 125, 155–156, arginine 187, arginine 193, 263–266, and lysine 337; these read RD and RADR. Aspartate 404, histidine 408, aspartate 445, histidine 446, and histidine 464 together coordinate Mn(2+).

It belongs to the BPG-independent phosphoglycerate mutase family. Monomer. Requires Mn(2+) as cofactor.

The enzyme catalyses (2R)-2-phosphoglycerate = (2R)-3-phosphoglycerate. The protein operates within carbohydrate degradation; glycolysis; pyruvate from D-glyceraldehyde 3-phosphate: step 3/5. Its function is as follows. Catalyzes the interconversion of 2-phosphoglycerate and 3-phosphoglycerate. This is 2,3-bisphosphoglycerate-independent phosphoglycerate mutase from Pseudomonas aeruginosa (strain ATCC 15692 / DSM 22644 / CIP 104116 / JCM 14847 / LMG 12228 / 1C / PRS 101 / PAO1).